The primary structure comprises 277 residues: Release factor glutamine methyltransferase (277 aa).

Residues 117 to 121 (GTGTG), aspartate 140, tryptophan 168, and asparagine 183 contribute to the S-adenosyl-L-methionine site. 183–186 (NPPY) provides a ligand contact to substrate.

The protein belongs to the protein N5-glutamine methyltransferase family. PrmC subfamily.

The catalysed reaction is L-glutaminyl-[peptide chain release factor] + S-adenosyl-L-methionine = N(5)-methyl-L-glutaminyl-[peptide chain release factor] + S-adenosyl-L-homocysteine + H(+). In terms of biological role, methylates the class 1 translation termination release factors RF1/PrfA and RF2/PrfB on the glutamine residue of the universally conserved GGQ motif. This chain is Release factor glutamine methyltransferase, found in Salmonella typhimurium (strain LT2 / SGSC1412 / ATCC 700720).